A 45-amino-acid chain; its full sequence is Pyruvate dehydrogenase E1 component (45 aa).

In terms of assembly, homodimer. Requires thiamine diphosphate as cofactor.

The enzyme catalyses N(6)-[(R)-lipoyl]-L-lysyl-[protein] + pyruvate + H(+) = N(6)-[(R)-S(8)-acetyldihydrolipoyl]-L-lysyl-[protein] + CO2. In terms of biological role, the pyruvate dehydrogenase complex catalyzes the overall conversion of pyruvate to acetyl-CoA and CO(2). It contains multiple copies of three enzymatic components: pyruvate dehydrogenase (E1), dihydrolipoamide acetyltransferase (E2) and lipoamide dehydrogenase (E3). The sequence is that of Pyruvate dehydrogenase E1 component from Azotobacter vinelandii.